The chain runs to 191 residues: Programmed cell death protein 6 (191 aa).

Alanine 2 carries the post-translational modification N-acetylalanine. 5 consecutive EF-hand domains span residues 23 to 58, 59 to 89, 90 to 125, 126 to 161, and 162 to 191; these read PDQS…GTWT, PFNP…TGVW, KYIT…FGYR, LSDQ…LQRL, and TDIF…FSIV. Ca(2+) is bound by residues aspartate 36, aspartate 38, serine 40, valine 42, and glutamate 47. Ca(2+)-binding residues include aspartate 103, aspartate 105, serine 107, methionine 109, and glutamate 114. Mg(2+)-binding residues include aspartate 169, aspartate 171, aspartate 173, and tryptophan 175.

Homodimer and heterodimer; heterodimerizes (via the EF-hand 5) with PEF1. Isoform 1 and isoform 2 self-associate; probably forming homodimers. Interacts with CPNE4 (via VWFA domain). Interacts with PDCD6IP; the interaction is calcium-dependent. Interacts with RBM22. Interacts with PLSCR4. Interacts with ANXA7 and TSG101. Interacts with DAPK1. Interacts with SEC31A; the interaction is calcium-dependent and promotes monoubiquitination of SEC31A. Interacts with ANXA11 (via N-terminus); the interaction is calcium-dependent. Interacts with PLSCR3 (via N-terminus); the interaction is calcium-dependent. Interacts with MCOLN1; the interaction is calcium-dependent. Interacts with KDR; the interaction is calcium-dependent. Interacts with HEBP2; the interaction is calcium-dependent. Interacts with TFG. Isoform 1: Interacts with SHISA5, leading to stabilize it. Isoform 2: Does not interact with SHISA5. Isoform 2: Does not interact with PDCD6IP, TSG101, ANXA7 and ANXA11.

Its subcellular location is the endoplasmic reticulum membrane. The protein resides in the cytoplasmic vesicle. The protein localises to the COPII-coated vesicle membrane. It localises to the cytoplasm. It is found in the nucleus. Its subcellular location is the endosome. Calcium sensor that plays a key role in processes such as endoplasmic reticulum (ER)-Golgi vesicular transport, endosomal biogenesis or membrane repair. Acts as an adapter that bridges unrelated proteins or stabilizes weak protein-protein complexes in response to calcium: calcium-binding triggers exposure of apolar surface, promoting interaction with different sets of proteins thanks to 3 different hydrophobic pockets, leading to translocation to membranes. Involved in ER-Golgi transport by promoting the association between PDCD6IP and TSG101, thereby bridging together the ESCRT-III and ESCRT-I complexes. Together with PEF1, acts as a calcium-dependent adapter for the BCR(KLHL12) complex, a complex involved in ER-Golgi transport by regulating the size of COPII coats. In response to cytosolic calcium increase, the heterodimer formed with PEF1 interacts with, and bridges together the BCR(KLHL12) complex and SEC31 (SEC31A or SEC31B), promoting monoubiquitination of SEC31 and subsequent collagen export, which is required for neural crest specification. Involved in the regulation of the distribution and function of MCOLN1 in the endosomal pathway. Promotes localization and polymerization of TFG at endoplasmic reticulum exit site. Required for T-cell receptor-, Fas-, and glucocorticoid-induced apoptosis. May mediate Ca(2+)-regulated signals along the death pathway: interaction with DAPK1 can accelerate apoptotic cell death by increasing caspase-3 activity. Its role in apoptosis may however be indirect, as suggested by knockout experiments. May inhibit KDR/VEGFR2-dependent angiogenesis; the function involves inhibition of VEGF-induced phosphorylation of the Akt signaling pathway. In terms of biological role, has a lower Ca(2+) affinity than isoform 1. The protein is Programmed cell death protein 6 (Pdcd6) of Mus musculus (Mouse).